Consider the following 658-residue polypeptide: NADPH-dependent diflavin oxidoreductase 1 (658 aa).

Positions 16 to 160 constitute a Flavodoxin-like domain; that stretch reads LTILYMTQTG…ELGPWMNRFW (145 aa). FMN contacts are provided by residues 22 to 27, 69 to 72, 107 to 116, and D142; these read TQTGTS, STTG, and LGDSTYPRFC. The region spanning 215–502 is the FAD-binding FR-type domain; it reads QGWSISILDK…IKPGYLTLPP (288 aa). FAD is bound by residues R400, 430-433, and 474-477; these read REFS and GLCT. Residues T514, 574 to 575, and 580 to 584 each bind NADP(+); these read SR and KTYVQ. An FAD-binding site is contributed by W657.

This sequence belongs to the NADPH-dependent diflavin oxidoreductase NDOR1 family. The protein in the N-terminal section; belongs to the flavodoxin family. It in the C-terminal section; belongs to the flavoprotein pyridine nucleotide cytochrome reductase family. Interacts with DRE2; as part of the cytosolic iron-sulfur (Fe-S) protein assembly (CIA) machinery. Requires FAD as cofactor. FMN is required as a cofactor.

The protein resides in the cytoplasm. It is found in the mitochondrion. It carries out the reaction 2 oxidized [2Fe-2S]-[protein] + NADPH = 2 reduced [2Fe-2S]-[protein] + NADP(+) + H(+). Functionally, NADPH-dependent reductase which is a central component of the cytosolic iron-sulfur (Fe-S) protein assembly (CIA) machinery. Transfers electrons from NADPH via its FAD and FMN prosthetic groups to the [2Fe-2S] cluster of DRE2, another key component of the CIA machinery. In turn, this reduced cluster provides electrons for assembly of cytosolic iron-sulfur cluster proteins. Positively controls H(2)O(2)-induced cell death. This is NADPH-dependent diflavin oxidoreductase 1 from Mycosarcoma maydis (Corn smut fungus).